Here is a 323-residue protein sequence, read N- to C-terminus: CTD kinase subunit beta (323 aa).

This sequence belongs to the cyclin family. CTDK-I consists of three subunits, CTK1, CTK2 and CTK3 (also called alpha, beta and gamma). Interacts with CTK1. Heterodimerization with CTK3 is required to protect this subunit from degradation. Phosphorylated. Ubiquitinated. Phosphorylation and ubiquitination lead to degradation in growth-related way by the ubiquitin-proteasome pathway. Neither phosphorylation nor degradation requires association with CTK1.

The protein localises to the nucleus. It localises to the nucleolus. Cyclin subunit of the CTDK-I complex, which hyperphosphorylates the C-terminal heptapeptide repeat domain (CTD) of the largest RNA polymerase II subunit. CTDK-I phosphorylates 'Ser-5' if the CTD substrate is not phosphorylated at 'Ser-5', but will phosphorylate 'Ser-2' of a CTD substrate if 'Ser-5' is already phosphorylated. CTDK-I is also more reactive toward substrates that are prephosphorylated at 'Ser-2' or 'Ser-5' compared with an unphosphorylated CTD substrate, therefore efficiently creating doubly phosphorylated CTD repeats. Involved in RNA polymerase II transcriptional elongation, and as part of the CTDK-I complex, pre-mRNA 3'-end processing and SET2 mediated H3K36 methylation. Together with CTK3, required for CTK1 CTD kinase activation. Required for DNA damage induced transcription. Involved in the adaptation to alternative carbon sources, including galactose, glycerol and ethanol, but not raffinose. Required for the integrity of the rDNA locus. This Saccharomyces cerevisiae (strain ATCC 204508 / S288c) (Baker's yeast) protein is CTD kinase subunit beta (CTK2).